Here is a 641-residue protein sequence, read N- to C-terminus: Mannosyl-oligosaccharide 1,2-alpha-mannosidase IB (641 aa).

T2 carries the N-acetylthreonine modification. The Cytoplasmic segment spans residues 2–36 (TTPALLPLSGRRIPPLNLGPPSFPHHRATLRLSEK). Residues 37 to 57 (FILLLILSAFITLCFGAFFFL) traverse the membrane as a helical; Signal-anchor for type II membrane protein segment. Residues 58–641 (PDSSKHKRFD…TTLSGNPAVR (584 aa)) lie on the Lumenal side of the membrane. The interval 153 to 175 (NKPLPPVPIPNLVGIRGGDPEDN) is disordered. C462 and C494 form a disulfide bridge. E508 acts as the Proton donor in catalysis. Residue T619 coordinates Ca(2+). Residue N631 is glycosylated (N-linked (GlcNAc...) asparagine).

This sequence belongs to the glycosyl hydrolase 47 family. Requires Ca(2+) as cofactor. As to expression, highest levels of expression in placenta and testis.

Its subcellular location is the golgi apparatus membrane. The catalysed reaction is N(4)-(alpha-D-Man-(1-&gt;2)-alpha-D-Man-(1-&gt;2)-alpha-D-Man-(1-&gt;3)-[alpha-D-Man-(1-&gt;2)-alpha-D-Man-(1-&gt;3)-[alpha-D-Man-(1-&gt;2)-alpha-D-Man-(1-&gt;6)]-alpha-D-Man-(1-&gt;6)]-beta-D-Man-(1-&gt;4)-beta-D-GlcNAc-(1-&gt;4)-beta-D-GlcNAc)-L-asparaginyl-[protein] (N-glucan mannose isomer 9A1,2,3B1,2,3) + 4 H2O = N(4)-(alpha-D-Man-(1-&gt;3)-[alpha-D-Man-(1-&gt;3)-[alpha-D-Man-(1-&gt;6)]-alpha-D-Man-(1-&gt;6)]-beta-D-Man-(1-&gt;4)-beta-D-GlcNAc-(1-&gt;4)-beta-D-GlcNAc)-L-asparaginyl-[protein] (N-glucan mannose isomer 5A1,2) + 4 beta-D-mannose. It carries out the reaction N(4)-(alpha-D-Man-(1-&gt;2)-alpha-D-Man-(1-&gt;2)-alpha-D-Man-(1-&gt;3)-[alpha-D-Man-(1-&gt;3)-[alpha-D-Man-(1-&gt;2)-alpha-D-Man-(1-&gt;6)]-alpha-D-Man-(1-&gt;6)]-beta-D-Man-(1-&gt;4)-beta-D-GlcNAc-(1-&gt;4)-beta-D-GlcNAc)-L-asparaginyl-[protein] (N-glucan mannose isomer 8A1,2,3B1,3) + 3 H2O = N(4)-(alpha-D-Man-(1-&gt;3)-[alpha-D-Man-(1-&gt;3)-[alpha-D-Man-(1-&gt;6)]-alpha-D-Man-(1-&gt;6)]-beta-D-Man-(1-&gt;4)-beta-D-GlcNAc-(1-&gt;4)-beta-D-GlcNAc)-L-asparaginyl-[protein] (N-glucan mannose isomer 5A1,2) + 3 beta-D-mannose. The protein operates within protein modification; protein glycosylation. Its activity is regulated as follows. Inhibited by both 1-deoxymannojirimycin and kifunensine. In terms of biological role, involved in the maturation of Asn-linked oligosaccharides. Progressively trim alpha-1,2-linked mannose residues from Man(9)GlcNAc(2) to produce Man(5)GlcNAc(2). The polypeptide is Mannosyl-oligosaccharide 1,2-alpha-mannosidase IB (MAN1A2) (Homo sapiens (Human)).